The sequence spans 239 residues: Pyridoxine 5'-phosphate synthase (239 aa).

N7 serves as a coordination point for 3-amino-2-oxopropyl phosphate. 9-10 (DH) lines the 1-deoxy-D-xylulose 5-phosphate pocket. R18 contributes to the 3-amino-2-oxopropyl phosphate binding site. H43 (proton acceptor) is an active-site residue. Residues R45 and H50 each contribute to the 1-deoxy-D-xylulose 5-phosphate site. The Proton acceptor role is filled by E70. T100 contributes to the 1-deoxy-D-xylulose 5-phosphate binding site. The Proton donor role is filled by H191. 3-amino-2-oxopropyl phosphate contacts are provided by residues G192 and 213–214 (GH).

It belongs to the PNP synthase family. As to quaternary structure, homooctamer; tetramer of dimers.

It localises to the cytoplasm. The catalysed reaction is 3-amino-2-oxopropyl phosphate + 1-deoxy-D-xylulose 5-phosphate = pyridoxine 5'-phosphate + phosphate + 2 H2O + H(+). Its pathway is cofactor biosynthesis; pyridoxine 5'-phosphate biosynthesis; pyridoxine 5'-phosphate from D-erythrose 4-phosphate: step 5/5. Its function is as follows. Catalyzes the complicated ring closure reaction between the two acyclic compounds 1-deoxy-D-xylulose-5-phosphate (DXP) and 3-amino-2-oxopropyl phosphate (1-amino-acetone-3-phosphate or AAP) to form pyridoxine 5'-phosphate (PNP) and inorganic phosphate. The polypeptide is Pyridoxine 5'-phosphate synthase (Trichormus variabilis (strain ATCC 29413 / PCC 7937) (Anabaena variabilis)).